We begin with the raw amino-acid sequence, 468 residues long: Pancreatic lipase-related protein 2 (468 aa).

Positions 1–16 (MLLCWIVSLLLATVGG) are cleaved as a signal peptide. C20 and C26 form a disulfide bridge. The interval 92 to 104 (VHGFIDKGEDGWL) is required for galactolipase activity. C108 and C119 are joined by a disulfide. S170 acts as the Nucleophile in catalysis. D194 functions as the Charge relay system in the catalytic mechanism. Residues E205, R208, D210, and D213 each coordinate Ca(2+). C255 and C279 are joined by a disulfide. The tract at residues 256–278 (QKNILSTIVDINGIWEGTQNFVA) is required for galactolipase activity. The active-site Charge relay system is H281. Intrachain disulfides connect C303–C314 and C317–C322. Residues N352 and N427 are each glycosylated (N-linked (GlcNAc...) asparagine). Residues 356–468 (WRYKVSVTLS…EDVLQSLYPC (113 aa)) form the PLAT domain. A disulfide bridge links C452 with C468.

Belongs to the AB hydrolase superfamily. Lipase family. As to expression, expressed in pancreatic acinar cells (at protein level).

It localises to the secreted. The protein resides in the zymogen granule membrane. Its subcellular location is the cell projection. The protein localises to the neuron projection. The enzyme catalyses a triacylglycerol + H2O = a diacylglycerol + a fatty acid + H(+). It carries out the reaction a 1,2-diacyl-3-O-(beta-D-galactosyl)-sn-glycerol + 2 H2O = 3-beta-D-galactosyl-sn-glycerol + 2 a fatty acid + 2 H(+). It catalyses the reaction 1,2,3-tri-(9Z-octadecenoyl)-glycerol + H2O = di-(9Z)-octadecenoylglycerol + (9Z)-octadecenoate + H(+). The catalysed reaction is di-(9Z)-octadecenoylglycerol + H2O = (9Z-octadecenoyl)-glycerol + (9Z)-octadecenoate + H(+). The enzyme catalyses (9Z-octadecenoyl)-glycerol + H2O = glycerol + (9Z)-octadecenoate + H(+). It carries out the reaction 1-(9Z-octadecenoyl)-glycerol + H2O = glycerol + (9Z)-octadecenoate + H(+). It catalyses the reaction 1,2,3-tripropanoylglycerol + H2O = dipropanoylglycerol + propanoate + H(+). The catalysed reaction is 1,2,3-tributanoylglycerol + H2O = dibutanoylglycerol + butanoate + H(+). The enzyme catalyses 1,2,3-trioctanoylglycerol + H2O = dioctanoylglycerol + octanoate + H(+). It carries out the reaction 1,2-didecanoylglycerol + H2O = decanoylglycerol + decanoate + H(+). It catalyses the reaction long chain 1,2-diacyl-3-O-beta-D-galactosyl-sn-glycerol + H2O = long chain acyl-3-O-beta-D-galactosyl-sn-glycerol + a fatty acid + H(+). The catalysed reaction is 1,2-dioctanoyl-3-O-beta-D-galactosyl-sn-glycerol + H2O = octanoyl-3-(beta-D-galactosyl)-sn-glycerol + octanoate + H(+). The enzyme catalyses 1,2-didodecanoyl-3-beta-D-galactosyl-sn-glycerol + H2O = dodecanoyl-3-beta-D-galactosyl-sn-glycerol + dodecanoate + H(+). It carries out the reaction 1-beta-D-galactosyl-2,3-didodecanoyl-sn-glycerol + H2O = 1-beta-D-galactosyl-dodecanoyl-sn-glycerol + dodecanoate + H(+). It catalyses the reaction a 1,2-diacyl-3-O-[alpha-D-galactosyl-(1-&gt;6)-beta-D-galactosyl]-sn-glycerol + H2O = acyl-3-O-[alpha-D-galactosyl-(1-&gt;6)-beta-D-galactosyl]-sn-glycerol + a fatty acid + H(+). The catalysed reaction is long chain 1,2-diacyl-3-O-[alpha-D-galactosyl-(1-&gt;6)-beta-D-galactosyl]-sn-glycerol + H2O = long chain acyl-3-O-[alpha-D-galactosyl-(1-&gt;6)-beta-D-galactosyl]-sn-glycerol + a fatty acid + H(+). The enzyme catalyses 1,2-dioctanoyl-3-O-[alpha-D-galactosyl-(1-&gt;6)-beta-D-galactosyl]-sn-glycerol + H2O = octanoyl-3-O-[alpha-D-galactosyl-(1-&gt;6)-beta-D-galactosyl]-sn-glycerol + octanoate + H(+). It carries out the reaction 1,2-didodecanoyl-3-O-[alpha-D-galactosyl-(1-&gt;6)-beta-D-galactosyl]-sn-glycerol + H2O = dodecanoyl-3-O-[alpha-D-galactosyl-(1-&gt;6)-beta-D-galactosyl]-sn-glycerol + dodecanoate + H(+). It catalyses the reaction a 1,2-diacyl-sn-glycero-3-phosphocholine + H2O = a monoacyl-sn-glycero-3-phosphocholine + a fatty acid + H(+). It functions in the pathway glycerolipid metabolism; triacylglycerol degradation. The protein operates within glycolipid metabolism. CLPS stimulates triacylglycerol lipase activity. Triacylglycerol lipase activity is not inhibited by increasing bile salt concentration. Functionally, lipase that primarily hydrolyzes triglycerides and galactosylglycerides. In neonates, may play a major role in pancreatic digestion of dietary fats such as milk fat globules enriched in long-chain triglycerides. Hydrolyzes short-, medium- and long-chain fatty acyls in triglycerides without apparent positional specificity. Can completely deacylate triacylglycerols. When the liver matures and bile salt synthesis increases, likely functions mainly as a galactolipase and monoacylglycerol lipase. Hydrolyzes monogalactosyldiglycerols (MGDG) and digalactosyldiacylglycerols (DGDG) present in a plant-based diet, releasing long-chain polyunsaturated fatty acids. Hydrolyzes medium- and long-chain fatty acyls in galactolipids. May act together with LIPF to hydrolyze partially digested triglycerides. Hydrolyzes long-chain monoglycerides with high efficiency. In cytotoxic T cells, contributes to perforin-dependent cell lysis, but is unlikely to mediate direct cytotoxicity. Also has low phospholipase activity. In neurons, required for the localization of the phospholipid 1-oleoyl-2-palmitoyl-PC (OPPC) to neurite tips through acyl chain remodeling of membrane phospholipids. The resulting OPPC-rich lipid membrane domain recruits the t-SNARE protein STX4 by selectively interacting with the STX4 transmembrane domain and this promotes surface expression of the dopamine transporter SLC6A3/DAT at neurite tips by facilitating fusion of SLC6A3-containing transport vesicles with the plasma membrane. The sequence is that of Pancreatic lipase-related protein 2 from Rattus norvegicus (Rat).